A 251-amino-acid chain; its full sequence is Phosphate import ATP-binding protein PstB 2 (251 aa).

Positions Ile5–Leu246 constitute an ABC transporter domain. Gly37–Ser44 is an ATP binding site.

Belongs to the ABC transporter superfamily. Phosphate importer (TC 3.A.1.7) family. In terms of assembly, the complex is composed of two ATP-binding proteins (PstB), two transmembrane proteins (PstC and PstA) and a solute-binding protein (PstS).

It localises to the cell membrane. The catalysed reaction is phosphate(out) + ATP + H2O = ADP + 2 phosphate(in) + H(+). Its function is as follows. Part of the ABC transporter complex PstSACB involved in phosphate import. Responsible for energy coupling to the transport system. The chain is Phosphate import ATP-binding protein PstB 2 from Ligilactobacillus salivarius (strain UCC118) (Lactobacillus salivarius).